Here is a 118-residue protein sequence, read N- to C-terminus: MSNAYDKAHELKEALAETQEFKSLYDLHRQIDADDIAKKMLENFRKLQLDLQQKQMQGVQISEEEAQQAQQQFELVSQHELISKLMDAEQRLSVIITDLNKIITEPLERIYGEPPQEQ.

It belongs to the UPF0342 family.

This chain is UPF0342 protein ABC1519, found in Shouchella clausii (strain KSM-K16) (Alkalihalobacillus clausii).